We begin with the raw amino-acid sequence, 88 residues long: DNA-directed RNA polymerase subunit omega (88 aa).

Belongs to the RNA polymerase subunit omega family. The RNAP catalytic core consists of 2 alpha, 1 beta, 1 beta' and 1 omega subunit. When a sigma factor is associated with the core the holoenzyme is formed, which can initiate transcription.

It catalyses the reaction RNA(n) + a ribonucleoside 5'-triphosphate = RNA(n+1) + diphosphate. Promotes RNA polymerase assembly. Latches the N- and C-terminal regions of the beta' subunit thereby facilitating its interaction with the beta and alpha subunits. This Anaeromyxobacter dehalogenans (strain 2CP-1 / ATCC BAA-258) protein is DNA-directed RNA polymerase subunit omega.